Consider the following 284-residue polypeptide: MINKVQILSVTPPGNLDAYIRIANLWPMLSIEEEKKLTKRLRYNGDLDAAKTLILSHLRFVIHISRNYSGYGLLQSDLIQEGNIGLMKAVRRFNPEIGVRLVSFAVHWIKSEIHEYVLRNWRIVKVATTKSQRKLFFNLRKTKKRLGWFNEEEIQIVARELGVSSRDVREMESRMSAQDVAFNPSPEEHCDSKTNSSIQYLQDKTSNFANGVEQDNWEEHAANKLSSALLRLDERSRHIIHARWLDKNKKNTLQNIANNYGISAERVRQLEKNAMKKLKLAIEA.

The sigma-70 factor domain-2 stretch occupies residues 53-122 (LILSHLRFVI…IHEYVLRNWR (70 aa)). The Interaction with polymerase core subunit RpoC motif lies at 77-80 (DLIQ). The tract at residues 228 to 280 (ALLRLDERSRHIIHARWLDKNKKNTLQNIANNYGISAERVRQLEKNAMKKLKL) is sigma-70 factor domain-4. The segment at residues 253 to 272 (LQNIANNYGISAERVRQLEK) is a DNA-binding region (H-T-H motif).

It belongs to the sigma-70 factor family. RpoH subfamily. As to quaternary structure, interacts with the RNA polymerase core enzyme.

It is found in the cytoplasm. Its function is as follows. Sigma factors are initiation factors that promote the attachment of RNA polymerase to specific initiation sites and are then released. This sigma factor is involved in regulation of expression of heat shock genes. This Buchnera aphidicola subsp. Acyrthosiphon pisum (strain APS) (Acyrthosiphon pisum symbiotic bacterium) protein is RNA polymerase sigma factor RpoH.